A 187-amino-acid chain; its full sequence is ATP synthase subunit b (187 aa).

A helical membrane pass occupies residues 32-52; that stretch reads NILDTNLINLAIIITVLFVFG.

Belongs to the ATPase B chain family. As to quaternary structure, F-type ATPases have 2 components, F(1) - the catalytic core - and F(0) - the membrane proton channel. F(1) has five subunits: alpha(3), beta(3), gamma(1), delta(1), epsilon(1). F(0) has four main subunits: a(1), b(1), b'(1) and c(10-14). The alpha and beta chains form an alternating ring which encloses part of the gamma chain. F(1) is attached to F(0) by a central stalk formed by the gamma and epsilon chains, while a peripheral stalk is formed by the delta, b and b' chains.

The protein resides in the cellular thylakoid membrane. F(1)F(0) ATP synthase produces ATP from ADP in the presence of a proton or sodium gradient. F-type ATPases consist of two structural domains, F(1) containing the extramembraneous catalytic core and F(0) containing the membrane proton channel, linked together by a central stalk and a peripheral stalk. During catalysis, ATP synthesis in the catalytic domain of F(1) is coupled via a rotary mechanism of the central stalk subunits to proton translocation. In terms of biological role, component of the F(0) channel, it forms part of the peripheral stalk, linking F(1) to F(0). This Trichormus variabilis (strain ATCC 29413 / PCC 7937) (Anabaena variabilis) protein is ATP synthase subunit b.